A 360-amino-acid chain; its full sequence is Phospho-N-acetylmuramoyl-pentapeptide-transferase (360 aa).

A run of 10 helical transmembrane segments spans residues R25–I45, T73–L93, Y97–Y117, W132–A152, V168–S188, G199–S219, A236–F256, V263–I283, I288–V308, and V338–K358.

This sequence belongs to the glycosyltransferase 4 family. MraY subfamily. It depends on Mg(2+) as a cofactor.

The protein resides in the cell inner membrane. The catalysed reaction is UDP-N-acetyl-alpha-D-muramoyl-L-alanyl-gamma-D-glutamyl-meso-2,6-diaminopimeloyl-D-alanyl-D-alanine + di-trans,octa-cis-undecaprenyl phosphate = di-trans,octa-cis-undecaprenyl diphospho-N-acetyl-alpha-D-muramoyl-L-alanyl-D-glutamyl-meso-2,6-diaminopimeloyl-D-alanyl-D-alanine + UMP. It participates in cell wall biogenesis; peptidoglycan biosynthesis. Catalyzes the initial step of the lipid cycle reactions in the biosynthesis of the cell wall peptidoglycan: transfers peptidoglycan precursor phospho-MurNAc-pentapeptide from UDP-MurNAc-pentapeptide onto the lipid carrier undecaprenyl phosphate, yielding undecaprenyl-pyrophosphoryl-MurNAc-pentapeptide, known as lipid I. The polypeptide is Phospho-N-acetylmuramoyl-pentapeptide-transferase (Pseudomonas fluorescens (strain ATCC BAA-477 / NRRL B-23932 / Pf-5)).